A 61-amino-acid polypeptide reads, in one-letter code: Sperm protamine P1 (61 aa).

The tract at residues 1–61 (MARYRHSRSR…RYSRRRRRRY (61 aa)) is disordered.

Belongs to the protamine P1 family. In terms of tissue distribution, testis.

The protein resides in the nucleus. The protein localises to the chromosome. Protamines substitute for histones in the chromatin of sperm during the haploid phase of spermatogenesis. They compact sperm DNA into a highly condensed, stable and inactive complex. The sequence is that of Sperm protamine P1 (PRM1) from Setonix brachyurus (Quokka).